The primary structure comprises 370 residues: Quinolinate synthase (370 aa).

Iminosuccinate is bound by residues His-62 and Ser-83. Residue Cys-128 coordinates [4Fe-4S] cluster. Iminosuccinate is bound by residues 154 to 156 (YAN) and Ser-171. Residue Cys-215 coordinates [4Fe-4S] cluster. Iminosuccinate-binding positions include 241-243 (HPE) and Thr-258. Position 312 (Cys-312) interacts with [4Fe-4S] cluster.

The protein belongs to the quinolinate synthase family. Type 1 subfamily. [4Fe-4S] cluster is required as a cofactor.

Its subcellular location is the cytoplasm. The enzyme catalyses iminosuccinate + dihydroxyacetone phosphate = quinolinate + phosphate + 2 H2O + H(+). The protein operates within cofactor biosynthesis; NAD(+) biosynthesis; quinolinate from iminoaspartate: step 1/1. Functionally, catalyzes the condensation of iminoaspartate with dihydroxyacetone phosphate to form quinolinate. The protein is Quinolinate synthase of Neisseria gonorrhoeae (strain ATCC 700825 / FA 1090).